Reading from the N-terminus, the 802-residue chain is Valine--tRNA ligase (802 aa).

Residues 45-55 carry the 'HIGH' region motif; it reads PTISGQLHIGH. The 'KMSKS' region signature appears at 524-528; it reads KMSKS. Lys527 provides a ligand contact to ATP.

It belongs to the class-I aminoacyl-tRNA synthetase family. ValS type 2 subfamily. In terms of assembly, monomer.

It is found in the cytoplasm. It carries out the reaction tRNA(Val) + L-valine + ATP = L-valyl-tRNA(Val) + AMP + diphosphate. Catalyzes the attachment of valine to tRNA(Val). As ValRS can inadvertently accommodate and process structurally similar amino acids such as threonine, to avoid such errors, it has a 'posttransfer' editing activity that hydrolyzes mischarged Thr-tRNA(Val) in a tRNA-dependent manner. In Ehrlichia canis (strain Jake), this protein is Valine--tRNA ligase.